Consider the following 62-residue polypeptide: Probable tautomerase SH1546 (62 aa).

The active-site Proton acceptor; via imino nitrogen is Pro-2.

This sequence belongs to the 4-oxalocrotonate tautomerase family.

The polypeptide is Probable tautomerase SH1546 (Staphylococcus haemolyticus (strain JCSC1435)).